Here is a 76-residue protein sequence, read N- to C-terminus: Serine proteinase inhibitor IA-1 (76 aa).

Position 1 is an N-acetylserine (S1).

Belongs to the protease inhibitor I9 family.

Specifically inhibits an endogenous intracellular serine proteinase (proteinase A). The sequence is that of Serine proteinase inhibitor IA-1 from Pleurotus ostreatus (Oyster mushroom).